The following is a 159-amino-acid chain: Putative UPF0479 protein YDR545C-A (159 aa).

A run of 2 helical transmembrane segments spans residues 38–58 and 135–155; these read IVFC…KVLQ and VPMI…ISQH.

Belongs to the UPF0479 family.

It is found in the membrane. The polypeptide is Putative UPF0479 protein YDR545C-A (Saccharomyces cerevisiae (strain ATCC 204508 / S288c) (Baker's yeast)).